A 204-amino-acid chain; its full sequence is MRVFIIKANEAHTANDFSLKDLPGTSGRIDLICRALNSAFHLSHSFRKNVRVYVTLLGPPDPPKSLRFEGPELKPKILNPDELSTAKIIGKALERGKDIKRKSTEEIKVLPGIYVSNMSFEDVIRVVIKRFPLYILEEDGKDITEVEFPKNNVAFVLGDHIGLSSEDLSFLESVGMKVSIGPKAYLTSHVIAYVNIYLDRLGIP.

S-adenosyl-L-methionine contacts are provided by leucine 136 and glycine 158.

Belongs to the methyltransferase superfamily. TrmY family. Homodimer.

Its subcellular location is the cytoplasm. It catalyses the reaction pseudouridine(54) in tRNA + S-adenosyl-L-methionine = N(1)-methylpseudouridine(54) in tRNA + S-adenosyl-L-homocysteine + H(+). Specifically catalyzes the N1-methylation of pseudouridine at position 54 (Psi54) in tRNAs. The protein is tRNA (pseudouridine(54)-N(1))-methyltransferase of Pyrococcus abyssi (strain GE5 / Orsay).